The sequence spans 37 residues: 24 kDa antigen (37 aa).

This is 24 kDa antigen from Plasmodium chabaudi.